A 224-amino-acid chain; its full sequence is MSTELVEDEAQFYCKAQKYWKNVPATVDGMLGGYGHISNIDLNGSKKFLQRFLRQEGSNKTGNMYALDCGAGIGRITKRLLLPLFKKVDMVDVTDEFLSKAKSYLGEEGSRVGNYFCCGLQEFSPEPNRYDVIWIQWVIGHLTDEHLVDFLKRCSLGLRPNGIIVIKDNVTQDVSIMDDVDSSICRDIDLVRKLIKQAGLSLLAVERQENFPDEIYHVFSFAMR.

S-adenosyl-L-methionine-binding positions include G70, R75, 92 to 94, 120 to 121, and Q136; these read DVT and LQ.

This sequence belongs to the methyltransferase superfamily. NTM1 family.

Its subcellular location is the nucleus. The catalysed reaction is N-terminal L-alanyl-L-prolyl-L-lysyl-[protein] + 3 S-adenosyl-L-methionine = N-terminal N,N,N-trimethyl-L-alanyl-L-prolyl-L-lysyl-[protein] + 3 S-adenosyl-L-homocysteine + 3 H(+). It catalyses the reaction N-terminal L-seryl-L-prolyl-L-lysyl-[protein] + 3 S-adenosyl-L-methionine = N-terminal N,N,N-trimethyl-L-seryl-L-prolyl-L-lysyl-[protein] + 3 S-adenosyl-L-homocysteine + 3 H(+). The enzyme catalyses N-terminal L-prolyl-L-prolyl-L-lysyl-[protein] + 2 S-adenosyl-L-methionine = N-terminal N,N-dimethyl-L-prolyl-L-prolyl-L-lysyl-[protein] + 2 S-adenosyl-L-homocysteine + 2 H(+). Functionally, distributive alpha-N-methyltransferase that methylates the N-terminus of target proteins containing the N-terminal motif [Ala/Gly/Pro/Ser]-Pro-Lys when the initiator Met is cleaved. Specifically catalyzes mono-, di- or tri-methylation of the exposed alpha-amino group of the Ala, Gly or Ser residue in the [Ala/Gly/Ser]-Pro-Lys motif and mono- or di-methylation of Pro in the Pro-Pro-Lys motif. Required during mitosis for normal bipolar spindle formation and chromosome segregation via its action on target proteins. The sequence is that of N-terminal Xaa-Pro-Lys N-methyltransferase 1 (ntmt1) from Xenopus tropicalis (Western clawed frog).